We begin with the raw amino-acid sequence, 904 residues long: Auxilin-related protein 1 (904 aa).

Disordered stretches follow at residues 46–99 (AAGK…FDYD), 150–731 (SSIS…NLRK), and 749–776 (SASQ…RHQR). Basic and acidic residues predominate over residues 59-69 (DPGRDGDDLLF). Residues 81–95 (YGSSSGDSRSPSAPA) are compositionally biased toward low complexity. Residues 178–188 (KGADSDREEKG) are compositionally biased toward basic and acidic residues. Residues 201 to 215 (RTSSPPSKRTTSETT) show a composition bias toward low complexity. Acidic residues predominate over residues 232–244 (VEEDPFVVLEESE). Residues 245 to 271 (STPREPSRTDPLDDIGKFNSRKTDHSS) are compositionally biased toward basic and acidic residues. Over residues 370–383 (SAPPPTRPPPPRPT) the composition is skewed to pro residues. A compositionally biased stretch (polar residues) spans 394-419 (SIPTSAYHSHVPSSGRASVNSPTASQ). The stretch at 456–663 (SAAAMKDAMD…AAAEARGRAA (208 aa)) forms a coiled coil. 2 stretches are compositionally biased toward basic and acidic residues: residues 462–570 (DAMD…EAHA) and 581–660 (TDAR…EARG). The R domain occupies 619–640 (REKAEKAAAEAKERANAEAREK). Over residues 661-673 (RAAAQAKAKQQQE) the composition is skewed to low complexity. Over residues 674–697 (NTNDLDSFFSSISRPNSAPRQRTN) the composition is skewed to polar residues. The stretch at 762–804 (ETEERRRARLERHQRTQERAAKALAEKNERDLQVQREQVEKDR) forms a coiled coil. Residues 764–776 (EERRRARLERHQR) show a composition bias toward basic and acidic residues. The J domain maps to 839–904 (CGWQPVSLTD…WNKFNSEELF (66 aa)).

In terms of assembly, interacts with SH3P1.

The protein localises to the cell membrane. The protein resides in the golgi apparatus. Its subcellular location is the trans-Golgi network. It is found in the endoplasmic reticulum. It localises to the cytoplasmic vesicle. In terms of biological role, promotes uncoating of clathrin-coated vesicles. May interact directly with clathrin. The protein is Auxilin-related protein 1 of Arabidopsis thaliana (Mouse-ear cress).